Here is a 328-residue protein sequence, read N- to C-terminus: Malate dehydrogenase (328 aa).

Position 13 to 19 (13 to 19) interacts with NAD(+); the sequence is GAAGQIS. Residues R94 and R100 each contribute to the substrate site. NAD(+)-binding positions include N107, Q114, and 131–133; that span reads VGN. Residues N133 and R164 each contribute to the substrate site. The Proton acceptor role is filled by H189.

The protein belongs to the LDH/MDH superfamily. MDH type 2 family.

It carries out the reaction (S)-malate + NAD(+) = oxaloacetate + NADH + H(+). In terms of biological role, catalyzes the reversible oxidation of malate to oxaloacetate. In Alcanivorax borkumensis (strain ATCC 700651 / DSM 11573 / NCIMB 13689 / SK2), this protein is Malate dehydrogenase.